Consider the following 157-residue polypeptide: SsrA-binding protein (157 aa).

It belongs to the SmpB family.

The protein resides in the cytoplasm. Its function is as follows. Required for rescue of stalled ribosomes mediated by trans-translation. Binds to transfer-messenger RNA (tmRNA), required for stable association of tmRNA with ribosomes. tmRNA and SmpB together mimic tRNA shape, replacing the anticodon stem-loop with SmpB. tmRNA is encoded by the ssrA gene; the 2 termini fold to resemble tRNA(Ala) and it encodes a 'tag peptide', a short internal open reading frame. During trans-translation Ala-aminoacylated tmRNA acts like a tRNA, entering the A-site of stalled ribosomes, displacing the stalled mRNA. The ribosome then switches to translate the ORF on the tmRNA; the nascent peptide is terminated with the 'tag peptide' encoded by the tmRNA and targeted for degradation. The ribosome is freed to recommence translation, which seems to be the essential function of trans-translation. This is SsrA-binding protein from Methylobacterium nodulans (strain LMG 21967 / CNCM I-2342 / ORS 2060).